A 341-amino-acid polypeptide reads, in one-letter code: tRNA N6-adenosine threonylcarbamoyltransferase (341 aa).

Fe cation contacts are provided by H111 and H115. Substrate contacts are provided by residues 134 to 138 (LVSGG), D167, G180, and N272. D300 serves as a coordination point for Fe cation.

The protein belongs to the KAE1 / TsaD family. Requires Fe(2+) as cofactor.

It is found in the cytoplasm. It carries out the reaction L-threonylcarbamoyladenylate + adenosine(37) in tRNA = N(6)-L-threonylcarbamoyladenosine(37) in tRNA + AMP + H(+). Functionally, required for the formation of a threonylcarbamoyl group on adenosine at position 37 (t(6)A37) in tRNAs that read codons beginning with adenine. Is involved in the transfer of the threonylcarbamoyl moiety of threonylcarbamoyl-AMP (TC-AMP) to the N6 group of A37, together with TsaE and TsaB. TsaD likely plays a direct catalytic role in this reaction. The sequence is that of tRNA N6-adenosine threonylcarbamoyltransferase from Blochmanniella pennsylvanica (strain BPEN).